A 568-amino-acid chain; its full sequence is MHAQDKGGVLPGLSLLLIAVAMVCPSQAAYKLQERYSWNQLDFAFPSARLKEQALASGDYIPTNALPVGVEHFGNRLFVTVPRWRDGIPATLTYINMDHSVTGSPELIPYPDWRANTAGDCSNSITTAYRIKVDECGRLWVLDTGTVGIGNTTTNPCPYAINIFDLTTNTRIRRYELPAADTNPNTFIANIAVDIGKNCDDAFAYFADELGYGLISYSWELNKSWRFSAHSYFFPDPLRGDFNVAGINFQWGEEGIFGMSLTPIRSDGYRTLYFSPLASHRQFAVSTRILRDETRTEDSYHDFVALDERGPNAHTTSRVMSDDGVELFNLIDQNAVGCWHSSMPYSPQFHGIVDRDDVGLVFPADVKIDENKNVWVLSDRMPVFLLSDLDYSDTNFRIYTAPLATLIENTVCDLRNNAYGPPNTVSIPKQAAPGHSAVGPPLYTTTNQYRPVLSQKPQTSWGPSPPSRNYLPALNGNPGIPGSLSKLNNLGAPGQVVSSVSVSTNTVGPSGIEVPKAYVFNQHNGLNYETSGPHLFPTLQPAPSQLGGGLKTYVNARQSGWWHHQQQG.

Residues 1-28 (MHAQDKGGVLPGLSLLLIAVAMVCPSQA) form the signal peptide. N-linked (GlcNAc...) asparagine glycosylation is found at Asn-151 and Asn-222.

Belongs to the major royal jelly protein family.

It localises to the secreted. Its function is as follows. Controls the pigmentation pattern of the adult cuticle and larval mouth parts. In Drosophila guanche (Fruit fly), this protein is Protein yellow (y).